Consider the following 409-residue polypeptide: UPF0261 protein Spro_4740 (409 aa).

Belongs to the UPF0261 family.

The sequence is that of UPF0261 protein Spro_4740 from Serratia proteamaculans (strain 568).